The sequence spans 685 residues: Galactocerebrosidase (685 aa).

The N-terminal stretch at 1 to 42 is a signal peptide; sequence MAEWLLSASRQRRVKAMTAAAGSAGRAAVPFLLCALLAPGGA. A substrate-binding site is contributed by Thr109. An N-linked (GlcNAc...) asparagine glycan is attached at Asn143. Substrate-binding residues include Trp151 and Asn197. The active-site Proton donor/acceptor is Glu198. Glu274 functions as the Nucleophile in the catalytic mechanism. Cysteines 287 and 394 form a disulfide. Asn379 carries N-linked (GlcNAc...) asparagine glycosylation. Position 396 (Arg396) interacts with substrate. N-linked (GlcNAc...) asparagine glycans are attached at residues Asn403, Asn451, Asn556, Asn559, and Asn602.

The protein belongs to the glycosyl hydrolase 59 family.

The protein localises to the lysosome. It carries out the reaction a beta-D-galactosyl-(1&lt;-&gt;1')-N-acylsphing-4-enine + H2O = an N-acylsphing-4-enine + D-galactose. The enzyme catalyses beta-D-galactosyl-(1&lt;-&gt;1)-sphing-4-enine + H2O = sphing-4-enine + D-galactose. The catalysed reaction is a D-galactosylceramide + H2O = an N-acyl-sphingoid base + D-galactose. Its function is as follows. Hydrolyzes the galactose ester bonds of glycolipids such as galactosylceramide and galactosylsphingosine. Enzyme with very low activity responsible for the lysosomal catabolism of galactosylceramide, a major lipid in myelin, kidney and epithelial cells of small intestine and colon. The protein is Galactocerebrosidase of Macaca mulatta (Rhesus macaque).